A 203-amino-acid chain; its full sequence is Dephospho-CoA kinase (203 aa).

In terms of domain architecture, DPCK spans 10 to 203 (IIGITGNIGS…LTGGAKGGRG (194 aa)). 18–23 (GSGKST) is a binding site for ATP.

The protein belongs to the CoaE family.

The protein localises to the cytoplasm. The enzyme catalyses 3'-dephospho-CoA + ATP = ADP + CoA + H(+). It functions in the pathway cofactor biosynthesis; coenzyme A biosynthesis; CoA from (R)-pantothenate: step 5/5. Functionally, catalyzes the phosphorylation of the 3'-hydroxyl group of dephosphocoenzyme A to form coenzyme A. This Thermus thermophilus (strain ATCC BAA-163 / DSM 7039 / HB27) protein is Dephospho-CoA kinase.